The chain runs to 293 residues: uncharacterized protein (293 aa).

A helical transmembrane segment spans residues 55 to 77; sequence IVLAKEIFAVAFFSLGMSCLLMA.

Its subcellular location is the membrane. This is an uncharacterized protein from Caenorhabditis elegans.